Here is a 599-residue protein sequence, read N- to C-terminus: Aspartate--tRNA(Asp/Asn) ligase (599 aa).

Glutamate 172 contacts L-aspartate. Residues glutamine 196–lysine 199 form an aspartate region. Arginine 218 provides a ligand contact to L-aspartate. ATP is bound by residues arginine 218 to glutamate 220 and glutamine 227. Histidine 454 provides a ligand contact to L-aspartate. An ATP-binding site is contributed by glutamate 488. Arginine 495 serves as a coordination point for L-aspartate. Glycine 540 to arginine 543 is a binding site for ATP.

It belongs to the class-II aminoacyl-tRNA synthetase family. Type 1 subfamily. As to quaternary structure, homodimer.

It localises to the cytoplasm. The catalysed reaction is tRNA(Asx) + L-aspartate + ATP = L-aspartyl-tRNA(Asx) + AMP + diphosphate. Its function is as follows. Aspartyl-tRNA synthetase with relaxed tRNA specificity since it is able to aspartylate not only its cognate tRNA(Asp) but also tRNA(Asn). Reaction proceeds in two steps: L-aspartate is first activated by ATP to form Asp-AMP and then transferred to the acceptor end of tRNA(Asp/Asn). This chain is Aspartate--tRNA(Asp/Asn) ligase, found in Methylibium petroleiphilum (strain ATCC BAA-1232 / LMG 22953 / PM1).